The chain runs to 214 residues: Putative F-box protein At3g58910 (214 aa).

Residues 1 to 47 form the F-box domain; the sequence is MDRVSSLPDELLCHILSFLTTKETALTSLLSKREIIPLIKSVVFPTL.

This is Putative F-box protein At3g58910 from Arabidopsis thaliana (Mouse-ear cress).